We begin with the raw amino-acid sequence, 173 residues long: Protein-export protein SecB 1 (173 aa).

The protein belongs to the SecB family. As to quaternary structure, homotetramer, a dimer of dimers. One homotetramer interacts with 1 SecA dimer.

The protein resides in the cytoplasm. One of the proteins required for the normal export of preproteins out of the cell cytoplasm. It is a molecular chaperone that binds to a subset of precursor proteins, maintaining them in a translocation-competent state. It also specifically binds to its receptor SecA. This chain is Protein-export protein SecB 1, found in Gluconobacter oxydans (strain 621H) (Gluconobacter suboxydans).